Here is a 490-residue protein sequence, read N- to C-terminus: Cytochrome P450 2C12, female-specific (490 aa).

Residue Cys435 participates in heme binding.

Belongs to the cytochrome P450 family. The cofactor is heme.

Its subcellular location is the endoplasmic reticulum membrane. The protein resides in the microsome membrane. The enzyme catalyses an organic molecule + reduced [NADPH--hemoprotein reductase] + O2 = an alcohol + oxidized [NADPH--hemoprotein reductase] + H2O + H(+). Its function is as follows. This P450 is active in 15-beta-hydroxylation of steroid sulfates. In Rattus norvegicus (Rat), this protein is Cytochrome P450 2C12, female-specific (Cyp2c12).